The chain runs to 219 residues: NADH-ubiquinone oxidoreductase 23 kDa subunit, mitochondrial (219 aa).

2 consecutive 4Fe-4S ferredoxin-type domains span residues 111–140 and 150–179; these read RRYP…IEAE and TRYD…ESPN. [4Fe-4S] cluster is bound by residues C120, C123, C126, C130, C159, C162, C165, and C169.

This sequence belongs to the complex I 23 kDa subunit family. As to quaternary structure, complex I is composed of about 40 different subunits. [4Fe-4S] cluster serves as cofactor.

It localises to the mitochondrion. It catalyses the reaction a ubiquinone + NADH + 5 H(+)(in) = a ubiquinol + NAD(+) + 4 H(+)(out). In terms of biological role, core subunit of the mitochondrial membrane respiratory chain NADH dehydrogenase (Complex I) that is believed to belong to the minimal assembly required for catalysis. Complex I functions in the transfer of electrons from NADH to the respiratory chain. The immediate electron acceptor for the enzyme is believed to be ubiquinone. May donate electrons to ubiquinone. The polypeptide is NADH-ubiquinone oxidoreductase 23 kDa subunit, mitochondrial (nuo21.3c) (Neurospora crassa (strain ATCC 24698 / 74-OR23-1A / CBS 708.71 / DSM 1257 / FGSC 987)).